The following is a 96-amino-acid chain: Acylphosphatase (96 aa).

Positions Ala11–Arg96 constitute an Acylphosphatase-like domain. Catalysis depends on residues Arg26 and Asn44.

This sequence belongs to the acylphosphatase family.

The enzyme catalyses an acyl phosphate + H2O = a carboxylate + phosphate + H(+). This Solibacter usitatus (strain Ellin6076) protein is Acylphosphatase (acyP).